The following is a 442-amino-acid chain: Glutamyl-tRNA reductase (442 aa).

Substrate-binding positions include 49–52 (TCNR), S109, 114–116 (ESQ), and Q120. Catalysis depends on C50, which acts as the Nucleophile. Residue 189-194 (GAGAMS) coordinates NADP(+).

The protein belongs to the glutamyl-tRNA reductase family. In terms of assembly, homodimer.

It carries out the reaction (S)-4-amino-5-oxopentanoate + tRNA(Glu) + NADP(+) = L-glutamyl-tRNA(Glu) + NADPH + H(+). It participates in porphyrin-containing compound metabolism; protoporphyrin-IX biosynthesis; 5-aminolevulinate from L-glutamyl-tRNA(Glu): step 1/2. Functionally, catalyzes the NADPH-dependent reduction of glutamyl-tRNA(Glu) to glutamate 1-semialdehyde (GSA). This is Glutamyl-tRNA reductase from Kineococcus radiotolerans (strain ATCC BAA-149 / DSM 14245 / SRS30216).